The primary structure comprises 132 residues: 3'-dehydrocarminate deglycosidase beta subunit (132 aa).

This sequence belongs to the C-glycoside deglycosidase beta subunit family. In terms of assembly, heterodimer composed of an alpha subunit (CarB) and a beta subunit (CarC). The cofactor is Mg(2+).

The enzyme catalyses 3'-dehydrocarminate + H(+) = kermesate + 1,5-anhydro-D-erythro-hex-1-en-3-ulose. Activity is strongly reduced in the presence of chelating agents. Its function is as follows. Carbon-carbon bond-cleaving enzyme which participates in a carminate degradation pathway. Cleaves the C-C bond in 3'-dehydrocarminate to form kermesate. Also shows weak activity with other C-glycosides, such as 3''-dehydropuerarin (3''-oxo-puerarin), 3''-dehydroisoorientin (3''-oxo-homoorientin) and 3'-dehydromangiferin (3'-oxo-mangiferin). The chain is 3'-dehydrocarminate deglycosidase beta subunit from Microbacterium sp.